Reading from the N-terminus, the 158-residue chain is 2-C-methyl-D-erythritol 2,4-cyclodiphosphate synthase (158 aa).

A divalent metal cation contacts are provided by D9 and H11. 4-CDP-2-C-methyl-D-erythritol 2-phosphate contacts are provided by residues 9–11 and 35–36; these read DVH and HS. Residue H43 participates in a divalent metal cation binding. 4-CDP-2-C-methyl-D-erythritol 2-phosphate is bound by residues 57–59, 62–66, 101–107, 133–136, F140, and R143; these read DIG, FPDTD, AQKPKMA, and TTTE.

It belongs to the IspF family. Homotrimer. A divalent metal cation serves as cofactor.

The enzyme catalyses 4-CDP-2-C-methyl-D-erythritol 2-phosphate = 2-C-methyl-D-erythritol 2,4-cyclic diphosphate + CMP. It participates in isoprenoid biosynthesis; isopentenyl diphosphate biosynthesis via DXP pathway; isopentenyl diphosphate from 1-deoxy-D-xylulose 5-phosphate: step 4/6. Functionally, involved in the biosynthesis of isopentenyl diphosphate (IPP) and dimethylallyl diphosphate (DMAPP), two major building blocks of isoprenoid compounds. Catalyzes the conversion of 4-diphosphocytidyl-2-C-methyl-D-erythritol 2-phosphate (CDP-ME2P) to 2-C-methyl-D-erythritol 2,4-cyclodiphosphate (ME-CPP) with a corresponding release of cytidine 5-monophosphate (CMP). The chain is 2-C-methyl-D-erythritol 2,4-cyclodiphosphate synthase from Bacillus cereus (strain ATCC 10987 / NRS 248).